Reading from the N-terminus, the 423-residue chain is Type II methyltransferase M.NlaIV (423 aa).

Positions 4–423 constitute an SAM-dependent MTase C5-type domain; the sequence is IKFIDLFSGM…AVSERLLHTL (420 aa). Cys80 is a catalytic residue.

This sequence belongs to the class I-like SAM-binding methyltransferase superfamily. C5-methyltransferase family.

It carries out the reaction a 2'-deoxycytidine in DNA + S-adenosyl-L-methionine = a 5-methyl-2'-deoxycytidine in DNA + S-adenosyl-L-homocysteine + H(+). In terms of biological role, a methylase that recognizes the double-stranded sequence 5'-GGNNCC-3', methylates C-? on both strands, and protects the DNA from cleavage by the NlaIV endonuclease. This Neisseria lactamica protein is Type II methyltransferase M.NlaIV (nlaIVM).